Here is a 378-residue protein sequence, read N- to C-terminus: UDP-N-acetylglucosamine--N-acetylmuramyl-(pentapeptide) pyrophosphoryl-undecaprenol N-acetylglucosamine transferase (378 aa).

Residues 14–16, asparagine 125, arginine 165, serine 193, and glutamine 293 contribute to the UDP-N-acetyl-alpha-D-glucosamine site; that span reads TGG.

This sequence belongs to the glycosyltransferase 28 family. MurG subfamily.

The protein resides in the cell inner membrane. It carries out the reaction di-trans,octa-cis-undecaprenyl diphospho-N-acetyl-alpha-D-muramoyl-L-alanyl-D-glutamyl-meso-2,6-diaminopimeloyl-D-alanyl-D-alanine + UDP-N-acetyl-alpha-D-glucosamine = di-trans,octa-cis-undecaprenyl diphospho-[N-acetyl-alpha-D-glucosaminyl-(1-&gt;4)]-N-acetyl-alpha-D-muramoyl-L-alanyl-D-glutamyl-meso-2,6-diaminopimeloyl-D-alanyl-D-alanine + UDP + H(+). It participates in cell wall biogenesis; peptidoglycan biosynthesis. Cell wall formation. Catalyzes the transfer of a GlcNAc subunit on undecaprenyl-pyrophosphoryl-MurNAc-pentapeptide (lipid intermediate I) to form undecaprenyl-pyrophosphoryl-MurNAc-(pentapeptide)GlcNAc (lipid intermediate II). The protein is UDP-N-acetylglucosamine--N-acetylmuramyl-(pentapeptide) pyrophosphoryl-undecaprenol N-acetylglucosamine transferase of Bartonella bacilliformis (strain ATCC 35685 / KC583 / Herrer 020/F12,63).